We begin with the raw amino-acid sequence, 373 residues long: Diels-Alderase (373 aa).

This sequence belongs to the Diels-Alderase family.

The catalysed reaction is (5S)-3-[(2E,6R,8E,10E,12E)-2,6-dimethyltetradeca-2,8,10,12-tetraenoyl]-5-(hydroxymethyl)pyrrolidine-2,4-dione = trichosetin. It functions in the pathway mycotoxin biosynthesis. Functionally, hybrid PKS-NRPS synthetase; part of the gene cluster that mediates the biosynthesis of trichosetin, a trans-fused decalin-containing tetramic acid with antimicrobial activity. The PKS module of PKS-NRPS1 together with the enoylreductase (ER) catalyze the formation of the polyketide unit which is then conjugated to L-serine by the condensation domain of the PKS-NRPS1 NRPS module. Activity of the Dieckmann cyclase domain (RED) results in release of the Dieckmann product intermediate. Diels-Alderase (DA) is involved in endo-selective Diels-Alder cycloaddition to form the decalin ring, leading to the production of N-desmethylequisetin also called trichosetin. The cluster does not contain the equisetin N-methyltransferase and consequently, trichosetin is isolated as final product. This is Diels-Alderase from Gibberella fujikuroi (strain CBS 195.34 / IMI 58289 / NRRL A-6831) (Bakanae and foot rot disease fungus).